A 417-amino-acid chain; its full sequence is Glutamyl-tRNA reductase (417 aa).

Substrate contacts are provided by residues 49–52 (TCNR), Ser-105, 110–112 (EPQ), and Gln-116. The Nucleophile role is filled by Cys-50. 185-190 (GAGEMI) contributes to the NADP(+) binding site.

Belongs to the glutamyl-tRNA reductase family. As to quaternary structure, homodimer.

The catalysed reaction is (S)-4-amino-5-oxopentanoate + tRNA(Glu) + NADP(+) = L-glutamyl-tRNA(Glu) + NADPH + H(+). It functions in the pathway porphyrin-containing compound metabolism; protoporphyrin-IX biosynthesis; 5-aminolevulinate from L-glutamyl-tRNA(Glu): step 1/2. Functionally, catalyzes the NADPH-dependent reduction of glutamyl-tRNA(Glu) to glutamate 1-semialdehyde (GSA). This is Glutamyl-tRNA reductase from Azoarcus sp. (strain BH72).